The chain runs to 274 residues: Imidazole glycerol phosphate synthase subunit HisF (274 aa).

Catalysis depends on residues Asp-11 and Asp-134.

Belongs to the HisA/HisF family. As to quaternary structure, heterodimer of HisH and HisF.

The protein localises to the cytoplasm. The enzyme catalyses 5-[(5-phospho-1-deoxy-D-ribulos-1-ylimino)methylamino]-1-(5-phospho-beta-D-ribosyl)imidazole-4-carboxamide + L-glutamine = D-erythro-1-(imidazol-4-yl)glycerol 3-phosphate + 5-amino-1-(5-phospho-beta-D-ribosyl)imidazole-4-carboxamide + L-glutamate + H(+). Its pathway is amino-acid biosynthesis; L-histidine biosynthesis; L-histidine from 5-phospho-alpha-D-ribose 1-diphosphate: step 5/9. Its function is as follows. IGPS catalyzes the conversion of PRFAR and glutamine to IGP, AICAR and glutamate. The HisF subunit catalyzes the cyclization activity that produces IGP and AICAR from PRFAR using the ammonia provided by the HisH subunit. This chain is Imidazole glycerol phosphate synthase subunit HisF, found in Methanosphaera stadtmanae (strain ATCC 43021 / DSM 3091 / JCM 11832 / MCB-3).